We begin with the raw amino-acid sequence, 493 residues long: Leucine-rich repeat-containing protein 14 (493 aa).

The LRR 1; degenerate repeat unit spans residues 111-146 (KHTLRVLDMTGLLDDGVEQDPGTMSMWDCTAAVART). Residues 194 to 218 (RLCCRDLRAEDLPMRNTVALLQLLD) form an LRR 2; degenerate repeat. An LRR 3; degenerate repeat occupies 219-246 (AGCLRRIDLRFNNLGLRGLSVIIPHVAR). The LRR 4; degenerate repeat unit spans residues 247–282 (FQHLASLRLHYVHGDSRQPSVDGEDNFRYFLAQMGR). 5 LRR repeats span residues 283–307 (FICL…LSTL), 308–339 (QRPL…AHLK), 340–360 (KLDL…QGLL), 364–391 (AATL…TLTR), and 392–416 (CASL…LLRD).

It belongs to the PRAME family. LRRC14 subfamily. Interacts with IKBKB; disrupts IKBKB-IKBKG interaction preventing I-kappa-B-kinase (IKK) core complex formation and leading to a decrease of IKBKB phosphorylation and NF-kappaB activation. Interacts with CHUK.

It is found in the cytoplasm. In terms of biological role, negatively regulates Toll-like receptor-mediated NF-kappa-B signaling by disrupting IKK core complex formation through interaction with IKBKB. This is Leucine-rich repeat-containing protein 14 from Rattus norvegicus (Rat).